The chain runs to 82 residues: Sec-independent protein translocase protein TatA (82 aa).

The chain crosses the membrane as a helical span at residues 1-21; it reads MGGISIWQLLIIAVIIVLLFG. The interval 46–82 is disordered; that stretch reads DEPAKDAKKDADFVPQNLEKKEAETVEKQKQNDKEQA.

This sequence belongs to the TatA/E family. In terms of assembly, the Tat system comprises two distinct complexes: a TatABC complex, containing multiple copies of TatA, TatB and TatC subunits, and a separate TatA complex, containing only TatA subunits. Substrates initially bind to the TatABC complex, which probably triggers association of the separate TatA complex to form the active translocon.

The protein resides in the cell inner membrane. Functionally, part of the twin-arginine translocation (Tat) system that transports large folded proteins containing a characteristic twin-arginine motif in their signal peptide across membranes. TatA could form the protein-conducting channel of the Tat system. The protein is Sec-independent protein translocase protein TatA of Aliivibrio fischeri (strain MJ11) (Vibrio fischeri).